Here is a 538-residue protein sequence, read N- to C-terminus: CTP synthase (538 aa).

The tract at residues 1 to 269 (MSPRKYVIVT…ARLVERRLFG (269 aa)) is amidoligase domain. Ser-15 serves as a coordination point for CTP. Ser-15 provides a ligand contact to UTP. 16-21 (SVGKGL) lines the ATP pocket. Tyr-56 provides a ligand contact to L-glutamine. Asp-73 contributes to the ATP binding site. Mg(2+)-binding residues include Asp-73 and Glu-143. Residues 150–152 (DIE), 190–195 (KTKPVQ), and Lys-226 contribute to the CTP site. UTP-binding positions include 190–195 (KTKPVQ) and Lys-226. The region spanning 294-538 (KVAMVGKYTK…FVTAVARLRG (245 aa)) is the Glutamine amidotransferase type-1 domain. Gly-358 is an L-glutamine binding site. Cys-385 functions as the Nucleophile; for glutamine hydrolysis in the catalytic mechanism. L-glutamine-binding positions include 386–389 (FGMQ), Glu-409, and Arg-466. Residues His-512 and Glu-514 contribute to the active site.

Belongs to the CTP synthase family. As to quaternary structure, homotetramer.

It carries out the reaction UTP + L-glutamine + ATP + H2O = CTP + L-glutamate + ADP + phosphate + 2 H(+). The catalysed reaction is L-glutamine + H2O = L-glutamate + NH4(+). It catalyses the reaction UTP + NH4(+) + ATP = CTP + ADP + phosphate + 2 H(+). Its pathway is pyrimidine metabolism; CTP biosynthesis via de novo pathway; CTP from UDP: step 2/2. Its activity is regulated as follows. Allosterically activated by GTP, when glutamine is the substrate; GTP has no effect on the reaction when ammonia is the substrate. The allosteric effector GTP functions by stabilizing the protein conformation that binds the tetrahedral intermediate(s) formed during glutamine hydrolysis. Inhibited by the product CTP, via allosteric rather than competitive inhibition. In terms of biological role, catalyzes the ATP-dependent amination of UTP to CTP with either L-glutamine or ammonia as the source of nitrogen. Regulates intracellular CTP levels through interactions with the four ribonucleotide triphosphates. In Aeropyrum pernix (strain ATCC 700893 / DSM 11879 / JCM 9820 / NBRC 100138 / K1), this protein is CTP synthase.